The following is a 522-amino-acid chain: Glucans biosynthesis protein G (522 aa).

An N-terminal signal peptide occupies residues 1–33 (MLDNKFGFKQRVASLRWLSAAIMLSVSAVPAWA).

It belongs to the OpgD/OpgG family.

Its subcellular location is the periplasm. It participates in glycan metabolism; osmoregulated periplasmic glucan (OPG) biosynthesis. Involved in the biosynthesis of osmoregulated periplasmic glucans (OPGs). The protein is Glucans biosynthesis protein G of Pectobacterium atrosepticum (strain SCRI 1043 / ATCC BAA-672) (Erwinia carotovora subsp. atroseptica).